A 301-amino-acid chain; its full sequence is Putative S-adenosyl-L-methionine-dependent methyltransferase MAP_3777 (301 aa).

Residues D126 and 155 to 156 (DL) contribute to the S-adenosyl-L-methionine site.

The protein belongs to the UPF0677 family.

Functionally, exhibits S-adenosyl-L-methionine-dependent methyltransferase activity. The sequence is that of Putative S-adenosyl-L-methionine-dependent methyltransferase MAP_3777 from Mycolicibacterium paratuberculosis (strain ATCC BAA-968 / K-10) (Mycobacterium paratuberculosis).